A 348-amino-acid polypeptide reads, in one-letter code: Ion-translocating oxidoreductase complex subunit D (348 aa).

3 consecutive transmembrane segments (helical) span residues 20–39 (LMKW…TYFF), 72–91 (ALRD…AIPP), and 120–140 (PFNP…VQMT). The residue at position 187 (Thr187) is an FMN phosphoryl threonine. 5 helical membrane-spanning segments follow: residues 214-234 (LAGV…LVLI), 241-261 (WHIP…FLMF), 266-286 (TASP…FFIA), 300-320 (LVFG…GGFP), and 321-341 (DGVA…DYYT).

It belongs to the NqrB/RnfD family. The complex is composed of six subunits: RnfA, RnfB, RnfC, RnfD, RnfE and RnfG. Requires FMN as cofactor.

The protein localises to the cell inner membrane. Functionally, part of a membrane-bound complex that couples electron transfer with translocation of ions across the membrane. The polypeptide is Ion-translocating oxidoreductase complex subunit D (Vibrio atlanticus (strain LGP32) (Vibrio splendidus (strain Mel32))).